The chain runs to 105 residues: Heat shock protein HspQ (105 aa).

The protein belongs to the HspQ family.

Its subcellular location is the cytoplasm. In terms of biological role, involved in the degradation of certain denaturated proteins, including DnaA, during heat shock stress. This Escherichia fergusonii (strain ATCC 35469 / DSM 13698 / CCUG 18766 / IAM 14443 / JCM 21226 / LMG 7866 / NBRC 102419 / NCTC 12128 / CDC 0568-73) protein is Heat shock protein HspQ.